The chain runs to 183 residues: UPF0398 protein BLi02355/BL05236 (183 aa).

This sequence belongs to the UPF0398 family.

This chain is UPF0398 protein BLi02355/BL05236, found in Bacillus licheniformis (strain ATCC 14580 / DSM 13 / JCM 2505 / CCUG 7422 / NBRC 12200 / NCIMB 9375 / NCTC 10341 / NRRL NRS-1264 / Gibson 46).